The sequence spans 213 residues: MIMNSTNTVVYIKVKGRRPQGFLDPPKFEWNGTKERQLWTMVSNLNYSQDQIDWQNLSKIFETPEFFLKKRTYKLFAEHLELLQLQLEKKRDLEKYSNDQVNEGMSDLIHKYTPTLQNDNLLNVSASPLTTERQDSEEVETEVTNEALQHLQTSKILNIHKKTSDSENKPNDKLDKDGINKEMECGSSDDDLSSSLSVSKSALEEALMDRLQF.

S106 carries the post-translational modification Phosphoserine. Residues 157-196 form a disordered region; that stretch reads LNIHKKTSDSENKPNDKLDKDGINKEMECGSSDDDLSSSL. The segment covering 162 to 184 has biased composition (basic and acidic residues); it reads KTSDSENKPNDKLDKDGINKEME. A phosphoserine mark is found at S187 and S188.

The protein belongs to the ATG29 family. In terms of assembly, forms a stable complex with ATG17 and ATG31. Interacts directly with ATG31. The ATG17-ATG29-ATG31 complex interacts with the ATG1-ATG13 complex. Note=The interaction with the ATG1-ATG13 complex is induced by starvation.

The protein localises to the preautophagosomal structure. Functionally, plays a role in autophagy. Functions at the preautophagosomal structure (PAS) in order to form normal autophagosomes under starvation conditions. Also plays a role in mitophagy and regulation of filamentous growth. The polypeptide is Autophagy-related protein 29 (ATG29) (Saccharomyces cerevisiae (strain ATCC 204508 / S288c) (Baker's yeast)).